A 488-amino-acid chain; its full sequence is Leucine-rich repeat-containing protein 74A (488 aa).

LRR repeat units follow at residues 134-155, 162-182, 191-212, 219-239, 247-268, 275-296, 303-324, and 331-351; these read AVTK…SLVE, YLQE…RIIS, SIWS…LLCQ, QIKK…EHLG, GLTS…ALCN, TLTK…ALGE, CLVY…KISK, and SLRV…ILLI.

The protein is Leucine-rich repeat-containing protein 74A of Homo sapiens (Human).